Consider the following 182-residue polypeptide: Oligoribonuclease (182 aa).

The region spanning 8–171 (LLWLDMEMTG…ADIYESIDEL (164 aa)) is the Exonuclease domain. The active site involves Tyr-129.

Belongs to the oligoribonuclease family.

It is found in the cytoplasm. Its function is as follows. 3'-to-5' exoribonuclease specific for small oligoribonucleotides. This chain is Oligoribonuclease, found in Thiobacillus denitrificans (strain ATCC 25259 / T1).